The following is a 343-amino-acid chain: Probable dual-specificity RNA methyltransferase RlmN (343 aa).

Residue E91 is the Proton acceptor of the active site. Positions 97-327 (YKHGNSICVS…TTIRREMGSD (231 aa)) constitute a Radical SAM core domain. A disulfide bond links C104 and C332. The [4Fe-4S] cluster site is built by C111, C115, and C118. S-adenosyl-L-methionine contacts are provided by residues 158-159 (GE), S190, 213-215 (SLH), and N289. The active-site S-methylcysteine intermediate is C332.

It belongs to the radical SAM superfamily. RlmN family. The cofactor is [4Fe-4S] cluster.

The protein localises to the cytoplasm. It carries out the reaction adenosine(2503) in 23S rRNA + 2 reduced [2Fe-2S]-[ferredoxin] + 2 S-adenosyl-L-methionine = 2-methyladenosine(2503) in 23S rRNA + 5'-deoxyadenosine + L-methionine + 2 oxidized [2Fe-2S]-[ferredoxin] + S-adenosyl-L-homocysteine. It catalyses the reaction adenosine(37) in tRNA + 2 reduced [2Fe-2S]-[ferredoxin] + 2 S-adenosyl-L-methionine = 2-methyladenosine(37) in tRNA + 5'-deoxyadenosine + L-methionine + 2 oxidized [2Fe-2S]-[ferredoxin] + S-adenosyl-L-homocysteine. Functionally, specifically methylates position 2 of adenine 2503 in 23S rRNA and position 2 of adenine 37 in tRNAs. This chain is Probable dual-specificity RNA methyltransferase RlmN, found in Clostridium novyi (strain NT).